Reading from the N-terminus, the 276-residue chain is UDP-3-O-acyl-N-acetylglucosamine deacetylase (276 aa).

Zn(2+) is bound by residues His76, His234, and Asp238. His261 acts as the Proton donor in catalysis.

The protein belongs to the LpxC family. The cofactor is Zn(2+).

The enzyme catalyses a UDP-3-O-[(3R)-3-hydroxyacyl]-N-acetyl-alpha-D-glucosamine + H2O = a UDP-3-O-[(3R)-3-hydroxyacyl]-alpha-D-glucosamine + acetate. It participates in glycolipid biosynthesis; lipid IV(A) biosynthesis; lipid IV(A) from (3R)-3-hydroxytetradecanoyl-[acyl-carrier-protein] and UDP-N-acetyl-alpha-D-glucosamine: step 2/6. Catalyzes the hydrolysis of UDP-3-O-myristoyl-N-acetylglucosamine to form UDP-3-O-myristoylglucosamine and acetate, the committed step in lipid A biosynthesis. In Synechocystis sp. (strain ATCC 27184 / PCC 6803 / Kazusa), this protein is UDP-3-O-acyl-N-acetylglucosamine deacetylase.